The following is a 316-amino-acid chain: MIFCLSSGQTPMAFRLPVVAEPEMPAGTDVSSTGRLPRWLKRPIPKSNSNHLTDSLMEEYGLETVCDNAKCPNRMECYSQQTATFMVLGNVCTRPCGFCAVSRGRPPAAPAVDEPDRIAKAAERLGLKHVVITSVTRDDLPDGGADHFHNCVIAVRERTGATTEVLTPDFVHCKEALARVIEAKPTVFNHNMETVPRLYRRVRGPKSDYAWTLEMMRQVKRYDAEVKTKSGLMLGLGEERGELLDALSDLREHDVDFLTLGQYLQPGEKYLPVVRYVPPEEFDELADIAKSMGFKKVASGPFVRSSYHARDMAETE.

[4Fe-4S] cluster-binding residues include cysteine 66, cysteine 71, cysteine 77, cysteine 92, cysteine 96, cysteine 99, and serine 306. The Radical SAM core domain occupies 78 to 295 (YSQQTATFMV…ADIAKSMGFK (218 aa)).

Belongs to the radical SAM superfamily. Lipoyl synthase family. [4Fe-4S] cluster serves as cofactor.

The protein localises to the cytoplasm. It catalyses the reaction [[Fe-S] cluster scaffold protein carrying a second [4Fe-4S](2+) cluster] + N(6)-octanoyl-L-lysyl-[protein] + 2 oxidized [2Fe-2S]-[ferredoxin] + 2 S-adenosyl-L-methionine + 4 H(+) = [[Fe-S] cluster scaffold protein] + N(6)-[(R)-dihydrolipoyl]-L-lysyl-[protein] + 4 Fe(3+) + 2 hydrogen sulfide + 2 5'-deoxyadenosine + 2 L-methionine + 2 reduced [2Fe-2S]-[ferredoxin]. The protein operates within protein modification; protein lipoylation via endogenous pathway; protein N(6)-(lipoyl)lysine from octanoyl-[acyl-carrier-protein]: step 2/2. Its function is as follows. Catalyzes the radical-mediated insertion of two sulfur atoms into the C-6 and C-8 positions of the octanoyl moiety bound to the lipoyl domains of lipoate-dependent enzymes, thereby converting the octanoylated domains into lipoylated derivatives. The polypeptide is Lipoyl synthase (Rhodopirellula baltica (strain DSM 10527 / NCIMB 13988 / SH1)).